Consider the following 685-residue polypeptide: Sodium-dependent phosphate transporter 1-B (685 aa).

6 helical membrane-spanning segments follow: residues 21-41, 66-86, 106-126, 162-182, 207-227, and 234-254; these read IMAPYLWMLVLGFVIAFVLAF, ACILASIFETVGSVLLGAKVS, LMAGSISAMFGSAVWQLAASF, IVLSWFISPLLSGIMSALLFF, ACTIGINLFSIMYTGAPLLGF, and GIILISVGCAVFCALFVWFFV. The tract at residues 489–511 is disordered; that stretch reads EGCIEDVVTDRKSSSSSLEERHD. Basic and acidic residues predominate over residues 496–511; that stretch reads VTDRKSSSSSLEERHD. The next 4 membrane-spanning stretches (helical) occupy residues 517–537, 565–585, 606–626, and 656–676; these read VSLLFQFLQILTACFGSFAHG, ATPIWLLLYGGIGICIGLWVW, FSIELASALTVVIASNVGLPI, and IFLAWFVTVPISGLISAGIMA.

This sequence belongs to the inorganic phosphate transporter (PiT) (TC 2.A.20) family.

It is found in the membrane. Its function is as follows. Sodium-phosphate symporter which plays a fundamental housekeeping role in phosphate transport. The protein is Sodium-dependent phosphate transporter 1-B (slc20a1-b) of Xenopus laevis (African clawed frog).